The sequence spans 196 residues: ATP-dependent Clp protease proteolytic subunit (196 aa).

Catalysis depends on Ser101, which acts as the Nucleophile. His126 is a catalytic residue.

Belongs to the peptidase S14 family. In terms of assembly, component of the chloroplastic Clp protease core complex.

The protein localises to the plastid. It is found in the chloroplast stroma. It carries out the reaction Hydrolysis of proteins to small peptides in the presence of ATP and magnesium. alpha-casein is the usual test substrate. In the absence of ATP, only oligopeptides shorter than five residues are hydrolyzed (such as succinyl-Leu-Tyr-|-NHMec, and Leu-Tyr-Leu-|-Tyr-Trp, in which cleavage of the -Tyr-|-Leu- and -Tyr-|-Trp bonds also occurs).. Its function is as follows. Cleaves peptides in various proteins in a process that requires ATP hydrolysis. Has a chymotrypsin-like activity. Plays a major role in the degradation of misfolded proteins. This chain is ATP-dependent Clp protease proteolytic subunit, found in Coffea arabica (Arabian coffee).